The primary structure comprises 299 residues: GTPase Era (299 aa).

The region spanning 5–175 (RSGFVCLVGR…IDVLAAALPP (171 aa)) is the Era-type G domain. Residues 13–20 (GRPNTGKS) are G1. 13 to 20 (GRPNTGKS) contributes to the GTP binding site. Residues 39–43 (QTTRH) form a G2 region. The interval 60 to 63 (DTPG) is G3. Residues 60 to 64 (DTPGL) and 124 to 127 (TKID) each bind GTP. Residues 124-127 (TKID) form a G4 region. The tract at residues 154–156 (VSA) is G5. One can recognise a KH type-2 domain in the interval 206 to 285 (VRDELPHSLA…YLDLRVKVAK (80 aa)).

The protein belongs to the TRAFAC class TrmE-Era-EngA-EngB-Septin-like GTPase superfamily. Era GTPase family. As to quaternary structure, monomer.

It localises to the cell envelope. It is found in the secreted. The protein localises to the cell wall. Functionally, exhibits GTPase activity. Binds RNA but is probably not involved in ribosome assembly in mycobacteria. The polypeptide is GTPase Era (Mycobacterium avium (strain 104)).